Consider the following 243-residue polypeptide: MARKGPKRHLKRLAAPTSWYIERKAYKWAVRPRPGPHNMRTSIPLLYIVRDYLGYAKTAREARKILNEGKFLVDGRVRKDYKFPVGIMDVVSIPETGEHYRVLPNRIGKLILHPISEDEAFIKPLRIRNKRMIKGARVQLNFHDGTNHIVSIAEKDNYFTSYTVLMKVPEREILEVLPFEKGAYVFVTQGKNVARKGRIVEIKRFPMGWPDVVTIEDEEGELFDTLKEYAFVVGTDKPKISLP.

The region spanning 43 to 105 (IPLLYIVRDY…TGEHYRVLPN (63 aa)) is the S4 RNA-binding domain.

It belongs to the eukaryotic ribosomal protein eS4 family. As to quaternary structure, part of the 30S ribosomal subunit.

The protein is Small ribosomal subunit protein eS4 of Pyrococcus furiosus (strain ATCC 43587 / DSM 3638 / JCM 8422 / Vc1).